The chain runs to 373 residues: Flagellar P-ring protein 1 (373 aa).

A signal peptide spans 1 to 24 (MRGISRLYWSLVLICFAFAPIVEA).

This sequence belongs to the FlgI family. In terms of assembly, the basal body constitutes a major portion of the flagellar organelle and consists of four rings (L,P,S, and M) mounted on a central rod.

It is found in the periplasm. The protein resides in the bacterial flagellum basal body. In terms of biological role, assembles around the rod to form the L-ring and probably protects the motor/basal body from shearing forces during rotation. This is Flagellar P-ring protein 1 from Hahella chejuensis (strain KCTC 2396).